We begin with the raw amino-acid sequence, 540 residues long: Glucose-6-phosphate isomerase (540 aa).

The active-site Proton donor is the E351. Residues H382 and K506 contribute to the active site.

It belongs to the GPI family.

It is found in the cytoplasm. It catalyses the reaction alpha-D-glucose 6-phosphate = beta-D-fructose 6-phosphate. It functions in the pathway carbohydrate biosynthesis; gluconeogenesis. Its pathway is carbohydrate degradation; glycolysis; D-glyceraldehyde 3-phosphate and glycerone phosphate from D-glucose: step 2/4. Catalyzes the reversible isomerization of glucose-6-phosphate to fructose-6-phosphate. The polypeptide is Glucose-6-phosphate isomerase (Corynebacterium glutamicum (strain ATCC 13032 / DSM 20300 / JCM 1318 / BCRC 11384 / CCUG 27702 / LMG 3730 / NBRC 12168 / NCIMB 10025 / NRRL B-2784 / 534)).